The following is a 386-amino-acid chain: Lipoyl synthase, mitochondrial (386 aa).

Residues 1–21 constitute a mitochondrion transit peptide; sequence MISRNSILLRRLYPTTIIRTL. Residues Cys107, Cys112, Cys118, Cys137, Cys141, Cys144, and Ser352 each coordinate [4Fe-4S] cluster. The region spanning 122-341 is the Radical SAM core domain; the sequence is KKSEATATIM…RDTALDMGFL (220 aa).

Belongs to the radical SAM superfamily. Lipoyl synthase family. [4Fe-4S] cluster serves as cofactor.

The protein resides in the mitochondrion. It carries out the reaction [[Fe-S] cluster scaffold protein carrying a second [4Fe-4S](2+) cluster] + N(6)-octanoyl-L-lysyl-[protein] + 2 oxidized [2Fe-2S]-[ferredoxin] + 2 S-adenosyl-L-methionine + 4 H(+) = [[Fe-S] cluster scaffold protein] + N(6)-[(R)-dihydrolipoyl]-L-lysyl-[protein] + 4 Fe(3+) + 2 hydrogen sulfide + 2 5'-deoxyadenosine + 2 L-methionine + 2 reduced [2Fe-2S]-[ferredoxin]. The protein operates within protein modification; protein lipoylation via endogenous pathway; protein N(6)-(lipoyl)lysine from octanoyl-[acyl-carrier-protein]: step 2/2. In terms of biological role, catalyzes the radical-mediated insertion of two sulfur atoms into the C-6 and C-8 positions of the octanoyl moiety bound to the lipoyl domains of lipoate-dependent enzymes, thereby converting the octanoylated domains into lipoylated derivatives. This Candida albicans (strain SC5314 / ATCC MYA-2876) (Yeast) protein is Lipoyl synthase, mitochondrial (LAB5).